Consider the following 217-residue polypeptide: Probable ribonuclease P protein subunit 1 (217 aa).

This sequence belongs to the eukaryotic/archaeal RNase P protein component 1 family.

The protein resides in the nucleus. It localises to the nucleolus. The catalysed reaction is Endonucleolytic cleavage of RNA, removing 5'-extranucleotides from tRNA precursor.. In terms of biological role, part of ribonuclease P, a protein complex that generates mature tRNA molecules by cleaving their 5'-ends. This chain is Probable ribonuclease P protein subunit 1, found in Schizosaccharomyces pombe (strain 972 / ATCC 24843) (Fission yeast).